The chain runs to 543 residues: 2-succinyl-5-enolpyruvyl-6-hydroxy-3-cyclohexene-1-carboxylate synthase (543 aa).

This sequence belongs to the TPP enzyme family. MenD subfamily. As to quaternary structure, homodimer. It depends on Mg(2+) as a cofactor. Mn(2+) is required as a cofactor. Requires thiamine diphosphate as cofactor.

The catalysed reaction is isochorismate + 2-oxoglutarate + H(+) = 5-enolpyruvoyl-6-hydroxy-2-succinyl-cyclohex-3-ene-1-carboxylate + CO2. It functions in the pathway quinol/quinone metabolism; 1,4-dihydroxy-2-naphthoate biosynthesis; 1,4-dihydroxy-2-naphthoate from chorismate: step 2/7. It participates in quinol/quinone metabolism; menaquinone biosynthesis. Its function is as follows. Catalyzes the thiamine diphosphate-dependent decarboxylation of 2-oxoglutarate and the subsequent addition of the resulting succinic semialdehyde-thiamine pyrophosphate anion to isochorismate to yield 2-succinyl-5-enolpyruvyl-6-hydroxy-3-cyclohexene-1-carboxylate (SEPHCHC). The sequence is that of 2-succinyl-5-enolpyruvyl-6-hydroxy-3-cyclohexene-1-carboxylate synthase from Corynebacterium glutamicum (strain R).